The following is a 171-amino-acid chain: Neudesin (171 aa).

Residues 1 to 30 form the signal peptide; that stretch reads MARPAPWWWLRPLAALALALALVRVPSARA. In terms of domain architecture, Cytochrome b5 heme-binding spans 43 to 128; sequence VRLFTEEELA…KELEALDDIF (86 aa). N6-acetyllysine is present on lysine 135. The interval 151–171 is disordered; the sequence is GSPNLDFKPEDQPHFDIKDEF. Residues 157 to 171 show a composition bias toward basic and acidic residues; the sequence is FKPEDQPHFDIKDEF.

It belongs to the cytochrome b5 family. MAPR subfamily. As to quaternary structure, interacts with PINK1 and PARK7.

It is found in the secreted. It localises to the extracellular space. The protein resides in the mitochondrion. The protein localises to the endoplasmic reticulum. Acts as a neurotrophic factor in postnatal mature neurons enhancing neuronal survival. Promotes cell proliferation and neurogenesis in undifferentiated neural progenitor cells at the embryonic stage and inhibits differentiation of astrocytes. Its neurotrophic activity is exerted via MAPK1/ERK2, MAPK3/ERK1 and AKT1/AKT pathways. Neurotrophic activity is enhanced by binding to heme. Also acts as an anorexigenic neurotrophic factor that contributes to energy balance. This is Neudesin from Rattus norvegicus (Rat).